Reading from the N-terminus, the 130-residue chain is Small ribosomal subunit protein uS8 (130 aa).

The protein belongs to the universal ribosomal protein uS8 family. In terms of assembly, part of the 30S ribosomal subunit. Contacts proteins S5 and S12.

Functionally, one of the primary rRNA binding proteins, it binds directly to 16S rRNA central domain where it helps coordinate assembly of the platform of the 30S subunit. This chain is Small ribosomal subunit protein uS8, found in Buchnera aphidicola subsp. Schizaphis graminum (strain Sg).